Reading from the N-terminus, the 1257-residue chain is Neurocan core protein (1257 aa).

Positions 1-22 are cleaved as a signal peptide; it reads MGAESVWASGLLVLWLLLLVSG. An Ig-like V-type domain is found at 37–157; that stretch reads HMLKSGSGPI…EQDLVTLEVT (121 aa). 5 disulfide bridges follow: C58/C139, C181/C252, C205/C226, C279/C354, and C303/C324. N121 is a glycosylation site (N-linked (GlcNAc...) asparagine). Link domains lie at 159-254 and 258-356; these read VVFH…YCFA and GGEV…YCFR. N339 is a glycosylation site (N-linked (GlcNAc...) asparagine). Residues 361 to 391 are disordered; that stretch reads TPQRGDSEIPSSGDEGEIVSAEGPPAPELKP. O-linked (Xyl...) (chondroitin sulfate) serine glycans are attached at residues S380 and S410. Low complexity predominate over residues 447–459; sequence SSTGVPSPSSLGV. 3 disordered regions span residues 447–493, 550–610, and 683–707; these read SSTG…FQQQ, GSLG…AVPS, and GAED…GSPE. A compositionally biased stretch (polar residues) spans 464–473; the sequence is TTPSGTQVAP. Over residues 569–580 the composition is skewed to low complexity; it reads SPSTVPSTDSTP. A glycan (N-linked (GlcNAc...) asparagine) is linked at N737. An O-linked (Xyl...) (chondroitin sulfate) serine glycan is attached at S944. Residues 949-985 enclose the EGF-like 1 domain; sequence PTDPCENNPCLHGGTCRTNGTMYGCSCDQGYAGENCE. Disulfide bonds link C953–C964, C958–C973, C975–C984, C991–C1002, C996–C1011, C1013–C1022, C1029–C1040, C1057–C1149, C1125–C1141, C1156–C1199, and C1185–C1212. N967 is a glycosylation site (N-linked (GlcNAc...) asparagine). The 37-residue stretch at 987–1023 folds into the EGF-like 2; calcium-binding domain; that stretch reads DIDDCLCSPCENGGTCIDEVNGFICLCLPSYGGNLCE. The C-type lectin domain maps to 1025–1154; that stretch reads DTEGCDRGWH…LPYVCKKGTV (130 aa). The Sushi domain occupies 1154-1214; the sequence is VLCGPPPAVE…WDRPQIVCTK (61 aa). An N-linked (GlcNAc...) asparagine glycan is attached at N1164. The span at 1215–1244 shows a compositional bias: basic residues; it reads PRRSHRMRRHHHHPHRHHKPRKEHRKHKRH. Residues 1215-1257 are disordered; the sequence is PRRSHRMRRHHHHPHRHHKPRKEHRKHKRHPAEDWEKDEGDFC.

Belongs to the aggrecan/versican proteoglycan family. Post-translationally, two isoforms were found that probably arise by proteolytic processing. The large isoform is predominant in early postnatal brain, the small isoform is found in adult brain. In terms of processing, O-glycosylated; contains chondroitin sulfate. In terms of tissue distribution, early postnatal and adult brain; not expressed in kidney, lung, liver and muscle.

The protein localises to the secreted. Functionally, may modulate neuronal adhesion and neurite growth during development by binding to neural cell adhesion molecules (NG-CAM and N-CAM). Chondroitin sulfate proteoglycan; binds to hyaluronic acid. This Rattus norvegicus (Rat) protein is Neurocan core protein (Ncan).